The following is a 157-amino-acid chain: Probable succinate transporter subunit YjjB (157 aa).

The next 4 membrane-spanning stretches (helical) occupy residues 15–35 (ILAA…VQAL), 50–70 (MILM…SMLV), 87–107 (VFTV…TAMI), and 121–141 (LMIT…ALSV).

Belongs to the ThrE exporter (TC 2.A.79) family. In terms of assembly, the transporter is composed of YjjB and YjjP.

The protein resides in the cell inner membrane. Its function is as follows. Involved in succinate export with YjjP. Both proteins are required for export. The protein is Probable succinate transporter subunit YjjB of Shigella dysenteriae serotype 1 (strain Sd197).